The chain runs to 526 residues: Glutamyl-tRNA(Gln) amidotransferase subunit A, mitochondrial (526 aa).

Lysine 76 (charge relay system) is an active-site residue. The disordered stretch occupies residues 147 to 166 (QYREKRKQNSHSENEDSNWL). Serine 171 serves as the catalytic Charge relay system. Serine 195 serves as the catalytic Acyl-ester intermediate.

It belongs to the amidase family. GatA subfamily. In terms of assembly, subunit of the heterotrimeric GatCAB amidotransferase (AdT) complex, composed of A (QRSL1), B (GATB) and C (GATC) subunits.

The protein resides in the mitochondrion. It carries out the reaction L-glutamyl-tRNA(Gln) + L-glutamine + ATP + H2O = L-glutaminyl-tRNA(Gln) + L-glutamate + ADP + phosphate + H(+). Functionally, allows the formation of correctly charged Gln-tRNA(Gln) through the transamidation of misacylated Glu-tRNA(Gln) in the mitochondria. The reaction takes place in the presence of glutamine and ATP through an activated gamma-phospho-Glu-tRNA(Gln). The chain is Glutamyl-tRNA(Gln) amidotransferase subunit A, mitochondrial from Bos taurus (Bovine).